A 509-amino-acid polypeptide reads, in one-letter code: Histidine--tRNA ligase, cytoplasmic (509 aa).

An N-acetylalanine modification is found at A2. The 57-residue stretch at 3–59 (ERAALEELVKLQGERVRGLKQQKASAELIEEEVAKLLKLKAQLGPDESKQKFVLKTP) folds into the WHEP-TRS domain. Residue S66 is modified to Phosphoserine. Residues 130–132 (DLT), R157, Q173, D177, R326, and 330–331 (YY) contribute to the L-histidine site. S356 is subject to Phosphoserine.

It belongs to the class-II aminoacyl-tRNA synthetase family. Homodimer. In terms of tissue distribution, brain, heart, liver and kidney.

It is found in the cytoplasm. The catalysed reaction is tRNA(His) + L-histidine + ATP = L-histidyl-tRNA(His) + AMP + diphosphate + H(+). In terms of biological role, catalyzes the ATP-dependent ligation of histidine to the 3'-end of its cognate tRNA, via the formation of an aminoacyl-adenylate intermediate (His-AMP). Plays a role in axon guidance. The chain is Histidine--tRNA ligase, cytoplasmic from Homo sapiens (Human).